Consider the following 321-residue polypeptide: uncharacterized protein (321 aa).

Catalysis depends on tyrosine 60, which acts as the Proton donor. Histidine 118 contacts substrate.

This sequence belongs to the aldo/keto reductase family.

This is an uncharacterized protein from Schizosaccharomyces pombe (strain 972 / ATCC 24843) (Fission yeast).